Consider the following 167-residue polypeptide: Secreted LysM effector Blys6 (167 aa).

Positions 1 to 16 (MKGLCVAACTLVLAAA) are cleaved as a signal peptide. Residues 109–162 (KWYRIRRGDDCGPVASEFGISADQLIEWNPWLSADVDGTHYPCMNIWPTDNLCV) enclose the LysM domain.

Belongs to the secreted LysM effector family.

Its function is as follows. Might have a role in sequestration of chitin oligosaccharides (breakdown products of fungal cell walls that are released during invasion and act as triggers of host immunity) to dampen host defense. The chain is Secreted LysM effector Blys6 from Beauveria bassiana (strain ARSEF 2860) (White muscardine disease fungus).